The following is a 171-amino-acid chain: UPF0763 protein HPSH_03535 (171 aa).

It belongs to the UPF0763 family.

The chain is UPF0763 protein HPSH_03535 from Helicobacter pylori (strain Shi470).